The following is a 175-amino-acid chain: Ribosome-binding factor A (175 aa).

A disordered region spans residues 129-175; sequence GAKPAGEADPYRDRGSADEPSDAGGLVIRTSDGLEAENTGDDYQAED. A compositionally biased stretch (acidic residues) spans 162–175; it reads LEAENTGDDYQAED.

Belongs to the RbfA family. Monomer. Binds 30S ribosomal subunits, but not 50S ribosomal subunits or 70S ribosomes.

Its subcellular location is the cytoplasm. Its function is as follows. One of several proteins that assist in the late maturation steps of the functional core of the 30S ribosomal subunit. Associates with free 30S ribosomal subunits (but not with 30S subunits that are part of 70S ribosomes or polysomes). Required for efficient processing of 16S rRNA. May interact with the 5'-terminal helix region of 16S rRNA. This is Ribosome-binding factor A from Mycobacterium marinum (strain ATCC BAA-535 / M).